The chain runs to 384 residues: MTVTAKTAARALLPNGLRDVLPPDAAFEVATVERLVSVFAANGYERVKTPLIEFEEGLLTGASRATAGQTFRVMDPITQRMMGLRADITIQVARLAASRLAKAPRPLRLTYSGQVLRVKGTQLRPERQFTQAGIELIGAGGVDAIAESVLLTVEALAQAGLPRVTVDLNCPPLVPALCRALGLSEDLAGELRKLLEQKDFTAAAALAGDAAGALSALSGTVGPAERALPVLAALDLPGEAAGHRDALLALARKVMTAAPEVDVTVDPLEHKGFEYYTGCSFALFAQGARGELGRGGEYPGDLNGTVEPCCGATLYMDAVLDGMVRPAPAPRVLVASTLARTTRRALQADGWVTVPALTAEAGAAEARRLGCGHVLDDEGRPVAV.

Belongs to the class-II aminoacyl-tRNA synthetase family. HisZ subfamily. As to quaternary structure, heteromultimer composed of HisG and HisZ subunits.

It is found in the cytoplasm. It participates in amino-acid biosynthesis; L-histidine biosynthesis; L-histidine from 5-phospho-alpha-D-ribose 1-diphosphate: step 1/9. Functionally, required for the first step of histidine biosynthesis. May allow the feedback regulation of ATP phosphoribosyltransferase activity by histidine. This chain is ATP phosphoribosyltransferase regulatory subunit, found in Rhodospirillum rubrum (strain ATCC 11170 / ATH 1.1.1 / DSM 467 / LMG 4362 / NCIMB 8255 / S1).